A 180-amino-acid polypeptide reads, in one-letter code: Superoxide dismutase [Cu-Zn] (180 aa).

Positions methionine 1 to alanine 19 are cleaved as a signal peptide. 3 residues coordinate Cu cation: histidine 68, histidine 70, and histidine 85. Cysteine 79 and cysteine 171 are oxidised to a cystine. Positions 85, 93, 102, and 105 each coordinate Zn(2+). Histidine 142 serves as a coordination point for Cu cation.

Belongs to the Cu-Zn superoxide dismutase family. As to quaternary structure, homodimer. Cu cation is required as a cofactor. It depends on Zn(2+) as a cofactor.

It localises to the cytoplasm. It catalyses the reaction 2 superoxide + 2 H(+) = H2O2 + O2. In terms of biological role, destroys radicals which are normally produced within the cells and which are toxic to biological systems. Required for normal brood size. May be involved in regulating mpk-1 phosphorylation downstream of phosphatase ptp-2 during oocyte maturation. The protein is Superoxide dismutase [Cu-Zn] of Caenorhabditis briggsae.